The sequence spans 394 residues: Gap junction gamma-1 protein (394 aa).

Residues 1 to 22 (MSWSFLTRLLEEIHNHSTFVGK) lie on the Cytoplasmic side of the membrane. A helical transmembrane segment spans residues 23–45 (IWLSVLIVFRIVLTAVGGESIYY). The Extracellular portion of the chain corresponds to 46 to 75 (DEQSKFVCNTEQPGCENVCYDAFAPLSHVR). The helical transmembrane segment at 76–95 (FWVFQIILVATPSVMYLGYA) threads the bilayer. Topologically, residues 96 to 176 (IHKIARMVEH…RRIREDGLMR (81 aa)) are cytoplasmic. The chain crosses the membrane as a helical span at residues 177-199 (IYVLQLLVRATFEVGFLIGQYLL). Topologically, residues 200–229 (YGFEVSPVFVCSRKPCPHKIDCFISRPTEK) are extracellular. Residues 230–252 (TIFLLIMYGVSCMCLLLNVWEML) traverse the membrane as a helical segment. Topologically, residues 253–394 (HLGFGTIRDT…SGDGKNSVWI (142 aa)) are cytoplasmic. The segment at 354–394 (IQAYNNQNNPGSSSREKKSKAGSNKSSASSKSGDGKNSVWI) is disordered. Residues 356 to 366 (AYNNQNNPGSS) show a composition bias toward polar residues. Residues 374–394 (AGSNKSSASSKSGDGKNSVWI) are compositionally biased toward low complexity.

Belongs to the connexin family. Gamma-type subfamily. In terms of assembly, a connexon is composed of a hexamer of connexins. Mostly in heart and stomach.

It is found in the cell membrane. The protein resides in the cell junction. It localises to the gap junction. In terms of biological role, one gap junction consists of a cluster of closely packed pairs of transmembrane channels, the connexons, through which materials of low MW diffuse from one cell to a neighboring cell. This chain is Gap junction gamma-1 protein (GJC1), found in Gallus gallus (Chicken).